A 229-amino-acid chain; its full sequence is NAD-dependent protein deacetylase (229 aa).

Residues 1-229 (MNKLNEALKK…SDAVKVFEEI (229 aa)) enclose the Deacetylase sirtuin-type domain. Residues Ala-20, Arg-32, Gln-96, Ile-98, Asp-99, His-114, Thr-181, Ser-182, Asn-205, and Val-223 each contribute to the NAD(+) site. Ile-98 and Asp-99 together coordinate nicotinamide. His-114 serves as the catalytic Proton acceptor.

This sequence belongs to the sirtuin family. Class U subfamily.

The protein localises to the cytoplasm. It catalyses the reaction N(6)-acetyl-L-lysyl-[protein] + NAD(+) + H2O = 2''-O-acetyl-ADP-D-ribose + nicotinamide + L-lysyl-[protein]. Functionally, NAD-dependent protein deacetylase which modulates the activities of several enzymes which are inactive in their acetylated form. This Listeria monocytogenes serovar 1/2a (strain ATCC BAA-679 / EGD-e) protein is NAD-dependent protein deacetylase.